The chain runs to 554 residues: Undecaprenyl phosphate-alpha-4-amino-4-deoxy-L-arabinose arabinosyl transferase (554 aa).

The next 11 helical transmembrane spans lie at 4–24 (LKDS…LLPV), 87–107 (FGSI…ATLL), 115–135 (VLAT…TYAV), 178–198 (FMTK…PIVI), 206–226 (LVVF…PWAL), 262–282 (YLPI…GALF), 293–313 (ELFF…VAKG), 315–335 (LPTY…AYAT), 351–371 (VINL…GLGL), 384–404 (QKVW…FITL), and 414–434 (AAAC…QQVV).

It belongs to the glycosyltransferase 83 family.

It is found in the cell inner membrane. The enzyme catalyses 4-amino-4-deoxy-alpha-L-arabinopyranosyl di-trans,octa-cis-undecaprenyl phosphate + lipid IVA = lipid IIA + di-trans,octa-cis-undecaprenyl phosphate.. The protein operates within lipopolysaccharide metabolism; 4-amino-4-deoxy-beta-L-arabinose-lipid A biosynthesis. Functionally, catalyzes the transfer of the L-Ara4N moiety of the glycolipid undecaprenyl phosphate-alpha-L-Ara4N to lipid A. The modified arabinose is attached to lipid A and is required for resistance to polymyxin and cationic antimicrobial peptides. In Yersinia pseudotuberculosis serotype O:1b (strain IP 31758), this protein is Undecaprenyl phosphate-alpha-4-amino-4-deoxy-L-arabinose arabinosyl transferase.